Reading from the N-terminus, the 145-residue chain is L-alanine exporter AlaE (145 aa).

The next 4 membrane-spanning stretches (helical) occupy residues 16–36 (FALV…LSGM), 42–62 (LSSR…YGLY), 86–106 (LFAY…VIGA), and 111–131 (ILTA…TYGY).

This sequence belongs to the AlaE exporter family.

The protein resides in the cell inner membrane. Its function is as follows. Exports L-alanine. The polypeptide is L-alanine exporter AlaE (Pectobacterium parmentieri (strain WPP163) (Pectobacterium wasabiae (strain WPP163))).